The primary structure comprises 727 residues: Glycerol-3-phosphate dehydrogenase, mitochondrial (727 aa).

Residues 1 to 42 (MAFQKAVKGTILVGGGALATVLGLSHFAHYKRKQVNLAFVEA) constitute a mitochondrion transit peptide. FAD is bound at residue 71–99 (DVLVIGGGATGSGCALDAVTRGLKTALVE). Position 601 is a phosphotyrosine (Tyr601). 2 consecutive EF-hand domains span residues 623 to 658 (SDID…IGVQ) and 659 to 694 (MDEN…IQKG). Residues Asp672, Asn674, Asn676, Gln678, and Glu683 each coordinate Ca(2+).

The protein belongs to the FAD-dependent glycerol-3-phosphate dehydrogenase family. FAD serves as cofactor.

Its subcellular location is the mitochondrion. The catalysed reaction is a quinone + sn-glycerol 3-phosphate = dihydroxyacetone phosphate + a quinol. It participates in polyol metabolism; glycerol degradation via glycerol kinase pathway; glycerone phosphate from sn-glycerol 3-phosphate (aerobic route): step 1/1. Its activity is regulated as follows. Calcium-binding enhance the activity of the enzyme. Its function is as follows. Calcium-responsive mitochondrial glycerol-3-phosphate dehydrogenase which seems to be a key component of the pancreatic beta-cell glucose-sensing device. The polypeptide is Glycerol-3-phosphate dehydrogenase, mitochondrial (GPD2) (Bos taurus (Bovine)).